A 140-amino-acid chain; its full sequence is MGKKLMRIGISLPGELLDKFDKTLMKRGYSSRSEGIRDAIRTYNQHYEWMKQIRGSRSATISIVYDCSKKGVTSTLAEIQHEYVDMISSSVHFHMEEDLCFEVIILRGEGEQIVDLAQRILSIKGVKHLRLTTVPEEKNE.

Positions 81, 92, 94, and 100 each coordinate Ni(2+).

The protein belongs to the transcriptional regulatory CopG/NikR family. Ni(2+) is required as a cofactor.

In terms of biological role, transcriptional regulator. The chain is Putative nickel-responsive regulator 3 from Methanosarcina mazei (strain ATCC BAA-159 / DSM 3647 / Goe1 / Go1 / JCM 11833 / OCM 88) (Methanosarcina frisia).